The chain runs to 92 residues: Co-chaperonin GroES (92 aa).

It belongs to the GroES chaperonin family. As to quaternary structure, heptamer of 7 subunits arranged in a ring. Interacts with the chaperonin GroEL.

It is found in the cytoplasm. Functionally, together with the chaperonin GroEL, plays an essential role in assisting protein folding. The GroEL-GroES system forms a nano-cage that allows encapsulation of the non-native substrate proteins and provides a physical environment optimized to promote and accelerate protein folding. GroES binds to the apical surface of the GroEL ring, thereby capping the opening of the GroEL channel. The polypeptide is Co-chaperonin GroES (Thermotoga maritima (strain ATCC 43589 / DSM 3109 / JCM 10099 / NBRC 100826 / MSB8)).